Here is a 230-residue protein sequence, read N- to C-terminus: Large ribosomal subunit protein uL1c (230 aa).

This sequence belongs to the universal ribosomal protein uL1 family. In terms of assembly, part of the 50S ribosomal subunit.

It is found in the plastid. It localises to the chloroplast. Its function is as follows. Binds directly to 23S rRNA. Might be involved in E site tRNA release (Potential). This Phaeodactylum tricornutum (strain CCAP 1055/1) protein is Large ribosomal subunit protein uL1c (rpl1).